The following is a 271-amino-acid chain: Formamidopyrimidine-DNA glycosylase (271 aa).

Pro2 functions as the Schiff-base intermediate with DNA in the catalytic mechanism. The active-site Proton donor is the Glu3. Lys58 functions as the Proton donor; for beta-elimination activity in the catalytic mechanism. Residues His91, Arg110, and Arg152 each contribute to the DNA site. The segment at 237-271 (WVYGRTGQPCRKCGALVSKTRQGQRSSFFCAQCQK) adopts an FPG-type zinc-finger fold. The Proton donor; for delta-elimination activity role is filled by Arg261.

The protein belongs to the FPG family. As to quaternary structure, monomer. Zn(2+) serves as cofactor.

The enzyme catalyses Hydrolysis of DNA containing ring-opened 7-methylguanine residues, releasing 2,6-diamino-4-hydroxy-5-(N-methyl)formamidopyrimidine.. It catalyses the reaction 2'-deoxyribonucleotide-(2'-deoxyribose 5'-phosphate)-2'-deoxyribonucleotide-DNA = a 3'-end 2'-deoxyribonucleotide-(2,3-dehydro-2,3-deoxyribose 5'-phosphate)-DNA + a 5'-end 5'-phospho-2'-deoxyribonucleoside-DNA + H(+). Functionally, involved in base excision repair of DNA damaged by oxidation or by mutagenic agents. Acts as a DNA glycosylase that recognizes and removes damaged bases. Has a preference for oxidized purines, such as 7,8-dihydro-8-oxoguanine (8-oxoG). Has AP (apurinic/apyrimidinic) lyase activity and introduces nicks in the DNA strand. Cleaves the DNA backbone by beta-delta elimination to generate a single-strand break at the site of the removed base with both 3'- and 5'-phosphates. In Nitrosomonas eutropha (strain DSM 101675 / C91 / Nm57), this protein is Formamidopyrimidine-DNA glycosylase.